A 454-amino-acid chain; its full sequence is SH2 domain-containing protein 4A (454 aa).

Disordered regions lie at residues 45-65 (AMER…NGKS), 107-131 (EQEA…KSQY), 152-177 (KEEL…SSSS), and 237-302 (RKSK…AYPQ). Positions 107 to 120 (EQEAEEPRKTHSEE) are enriched in basic and acidic residues. S118 and S124 each carry phosphoserine. Residues 240 to 259 (KAADEKRRSLAKQAREDYKR) are compositionally biased toward basic and acidic residues. S261 and S315 each carry phosphoserine. The SH2 domain occupies 347–440 (WFHGILTLKK…LGKELLLYPC (94 aa)).

In terms of assembly, interacts with ESR1. In terms of tissue distribution, ubiquitously expressed. Aberrantly expressed in some cancers.

Its subcellular location is the cytoplasm. Inhibits estrogen-induced cell proliferation by competing with PLCG for binding to ESR1, blocking the effect of estrogen on PLCG and repressing estrogen-induced proliferation. May play a role in T-cell development and function. This is SH2 domain-containing protein 4A (SH2D4A) from Homo sapiens (Human).